The following is a 113-amino-acid chain: Antisense of depressing factor protein 1 (113 aa).

Residues 1–11 (MGKCSMKKKGV) are compositionally biased toward basic residues. The tract at residues 1 to 35 (MGKCSMKKKGVGKNVGVGKKVQKKRSISTAERKRT) is disordered.

The protein belongs to the ADF1 family.

Its subcellular location is the nucleus. Transcriptional repressor which negatively regulates transcription of FYV5 by binding to the promoter on the sense strand. This is Antisense of depressing factor protein 1 from Saccharomyces cerevisiae (strain ATCC 204508 / S288c) (Baker's yeast).